A 486-amino-acid chain; its full sequence is Siroheme synthase (486 aa).

The interval 1–204 is precorrin-2 dehydrogenase /sirohydrochlorin ferrochelatase; sequence MNYLPIFVDL…HQIEQAEALV (204 aa). Residues 22–23 and 43–44 each bind NAD(+); these read HI and EK. Serine 128 carries the phosphoserine modification. The uroporphyrinogen-III C-methyltransferase stretch occupies residues 216–486; the sequence is GEVSLVGAGP…NKETHWKQAA (271 aa). Residue proline 225 coordinates S-adenosyl-L-methionine. Aspartate 248 acts as the Proton acceptor in catalysis. Lysine 270 (proton donor) is an active-site residue. Residues 301 to 303, valine 306, 331 to 332, methionine 383, and glycine 412 contribute to the S-adenosyl-L-methionine site; these read GGD and TA.

The protein in the N-terminal section; belongs to the precorrin-2 dehydrogenase / sirohydrochlorin ferrochelatase family. In the C-terminal section; belongs to the precorrin methyltransferase family.

The catalysed reaction is uroporphyrinogen III + 2 S-adenosyl-L-methionine = precorrin-2 + 2 S-adenosyl-L-homocysteine + H(+). The enzyme catalyses precorrin-2 + NAD(+) = sirohydrochlorin + NADH + 2 H(+). It carries out the reaction siroheme + 2 H(+) = sirohydrochlorin + Fe(2+). It functions in the pathway cofactor biosynthesis; adenosylcobalamin biosynthesis; precorrin-2 from uroporphyrinogen III: step 1/1. The protein operates within cofactor biosynthesis; adenosylcobalamin biosynthesis; sirohydrochlorin from precorrin-2: step 1/1. Its pathway is porphyrin-containing compound metabolism; siroheme biosynthesis; precorrin-2 from uroporphyrinogen III: step 1/1. It participates in porphyrin-containing compound metabolism; siroheme biosynthesis; siroheme from sirohydrochlorin: step 1/1. It functions in the pathway porphyrin-containing compound metabolism; siroheme biosynthesis; sirohydrochlorin from precorrin-2: step 1/1. Multifunctional enzyme that catalyzes the SAM-dependent methylations of uroporphyrinogen III at position C-2 and C-7 to form precorrin-2 via precorrin-1. Then it catalyzes the NAD-dependent ring dehydrogenation of precorrin-2 to yield sirohydrochlorin. Finally, it catalyzes the ferrochelation of sirohydrochlorin to yield siroheme. This chain is Siroheme synthase, found in Actinobacillus pleuropneumoniae serotype 3 (strain JL03).